We begin with the raw amino-acid sequence, 243 residues long: Membrane selenoprotein (243 aa).

Residues 12 to 63 are disordered; the sequence is GEDCEGGVUARPSSSSSSINNASDESTPLISKTNDEEKANIGISSTSNSPQE. A non-standard amino acid (selenocysteine) is located at residue Sec20. Composition is skewed to polar residues over residues 30-43 and 53-63; these read INNA…LISK and GISSTSNSPQE. The next 4 membrane-spanning stretches (helical) occupy residues 74 to 94, 102 to 122, 144 to 164, and 199 to 219; these read ILTL…PVLI, VSAG…LSIL, IKFG…FDIL, and VMGW…LLVG. Sec88 is a non-standard amino acid (selenocysteine).

Its subcellular location is the membrane. The chain is Membrane selenoprotein (msp) from Dictyostelium discoideum (Social amoeba).